The sequence spans 150 residues: Large ribosomal subunit protein uL15 (150 aa).

The disordered stretch occupies residues 1–57 (MRLEDIRPQAGSTRRRRRLGRGVSAGQGASCGKGMRGQKARKGGSTRPGFEGGQTPL). Residues 23–35 (VSAGQGASCGKGM) show a composition bias toward gly residues.

The protein belongs to the universal ribosomal protein uL15 family. In terms of assembly, part of the 50S ribosomal subunit.

In terms of biological role, binds to the 23S rRNA. The protein is Large ribosomal subunit protein uL15 of Synechococcus sp. (strain JA-2-3B'a(2-13)) (Cyanobacteria bacterium Yellowstone B-Prime).